A 65-amino-acid polypeptide reads, in one-letter code: Translational regulator CsrA (65 aa).

Belongs to the CsrA/RsmA family. As to quaternary structure, homodimer; the beta-strands of each monomer intercalate to form a hydrophobic core, while the alpha-helices form wings that extend away from the core.

Its subcellular location is the cytoplasm. A translational regulator that binds mRNA to regulate translation initiation and/or mRNA stability. Usually binds in the 5'-UTR at or near the Shine-Dalgarno sequence preventing ribosome-binding, thus repressing translation. Its main target seems to be the major flagellin gene, while its function is anatagonized by FliW. This is Translational regulator CsrA from Bordetella petrii (strain ATCC BAA-461 / DSM 12804 / CCUG 43448).